The sequence spans 310 residues: Putative olfactory receptor 7A2 (310 aa).

Residues 1-26 (MVKAGNETQISEFLLLGFSEKQELQP) are Extracellular-facing. Asparagine 6 carries an N-linked (GlcNAc...) asparagine glycan. A helical membrane pass occupies residues 27–47 (FLFGLFLSMYLVTVLGNLLII). Residues 48 to 55 (LAAISDSC) are Cytoplasmic-facing. Residues 56-76 (LHTPMYFFLSNLSFVDICFAS) form a helical membrane-spanning segment. Residues 77 to 100 (TMVPKMLVNIQTQSKVITYAGCIT) lie on the Extracellular side of the membrane. A disulfide bridge links cysteine 98 with cysteine 190. The helical transmembrane segment at 101–121 (QMCFFVLFIVLDSLLLTVMAY) threads the bilayer. The Cytoplasmic portion of the chain corresponds to 122-140 (DQFVAICHPLHYTVIMSPQ). Residues 141–161 (LCGLLVLVSWIMSVLNSMLQS) traverse the membrane as a helical segment. At 162-198 (LVTLQLSFCTDLEIPHFFCELNEMIHLACSDTFVNNM) the chain is on the extracellular side. A helical membrane pass occupies residues 199-218 (VMHFAAVLLDGGPLVGILYS). Residues 219–238 (YCRIVSSIRAISSTQGKYKA) lie on the Cytoplasmic side of the membrane. The helical transmembrane segment at 239–259 (LSTCASHLSVVSIFYGTGLGV) threads the bilayer. The Extracellular segment spans residues 260–272 (YLSSTMTQNLHST). The helical transmembrane segment at 273-293 (AVASVMYTVVTPMLNPFIYSL) threads the bilayer. The Cytoplasmic portion of the chain corresponds to 294–310 (RNKDIKGALTQFFRGKQ).

Belongs to the G-protein coupled receptor 1 family.

It is found in the cell membrane. Its function is as follows. Odorant receptor. The protein is Putative olfactory receptor 7A2 (OR7A2P) of Homo sapiens (Human).